The chain runs to 318 residues: MWLKSLLLCLYSLVLCQVHAAPSSGKQITSKDVDLQKKYEPSPPATHRGIITIEYFDPVSKSMKEADLTFELYGTVVPKTVNNFAMLAHGVKAVIEGKDPNDIHTYSYRKTKINKVYPNKYIQGGVVAPDVGPFTVYGPKFDDENFYLKHDRPERLAMAYFGPDSNTSEFIITTKADGNEELDGKSVVFGQITSGLDQLMDAIQYTETDEYGKPQHELRFLYFVLEILKISNILDLHAAYTEKVEKFRNGDVSVGSTLENIFRNDKAYTPLTTSTGTTAYDLNHPISRALMCLTVLGLCFIAYKGMHEKPHTVSLRHK.

The N-terminal stretch at 1-20 is a signal peptide; the sequence is MWLKSLLLCLYSLVLCQVHA. One can recognise a PPIase cyclophilin-type domain in the interval 55-225; the sequence is YFDPVSKSMK…HELRFLYFVL (171 aa). Residue Asn-166 is glycosylated (N-linked (GlcNAc...) asparagine). A helical membrane pass occupies residues 286–303; the sequence is ISRALMCLTVLGLCFIAY.

It is found in the membrane. The enzyme catalyses [protein]-peptidylproline (omega=180) = [protein]-peptidylproline (omega=0). PPIases accelerate the folding of proteins. It catalyzes the cis-trans isomerization of proline imidic peptide bonds in oligopeptides. This Saccharomyces cerevisiae (strain ATCC 204508 / S288c) (Baker's yeast) protein is Peptidyl-prolyl cis-trans isomerase CPR4 (CPR4).